The following is a 311-amino-acid chain: Nucleotide-binding protein Acel_1111 (311 aa).

30-37 (GLSGAGRS) serves as a coordination point for ATP. GTP is bound at residue 81-84 (DVRS).

Belongs to the RapZ-like family.

Its function is as follows. Displays ATPase and GTPase activities. In Acidothermus cellulolyticus (strain ATCC 43068 / DSM 8971 / 11B), this protein is Nucleotide-binding protein Acel_1111.